We begin with the raw amino-acid sequence, 210 residues long: Proline-rich protein 20G (210 aa).

Positions 1–11 are enriched in basic residues; sequence MEEPRHSKRPR. A disordered region spans residues 1–82; the sequence is MEEPRHSKRP…GGSWRAGRGR (82 aa). The span at 69 to 82 shows a compositional bias: gly residues; the sequence is GQRGGGSWRAGRGR.

It belongs to the PRR20 family.

The sequence is that of Proline-rich protein 20G from Homo sapiens (Human).